The primary structure comprises 277 residues: MEMO1 family protein MTH_45 (277 aa).

This sequence belongs to the MEMO1 family.

The sequence is that of MEMO1 family protein MTH_45 from Methanothermobacter thermautotrophicus (strain ATCC 29096 / DSM 1053 / JCM 10044 / NBRC 100330 / Delta H) (Methanobacterium thermoautotrophicum).